Consider the following 569-residue polypeptide: Urease subunit alpha (569 aa).

One can recognise a Urease domain in the interval 131-569 (GGIDAHIHWI…LPLAQRYFLF (439 aa)). Ni(2+) is bound by residues H136, H138, and K219. K219 is modified (N6-carboxylysine). Residue H221 participates in substrate binding. Ni(2+)-binding residues include H248 and H274. H322 functions as the Proton donor in the catalytic mechanism. D362 provides a ligand contact to Ni(2+).

This sequence belongs to the metallo-dependent hydrolases superfamily. Urease alpha subunit family. In terms of assembly, heterotrimer of UreA (gamma), UreB (beta) and UreC (alpha) subunits. Three heterotrimers associate to form the active enzyme. It depends on Ni cation as a cofactor. Post-translationally, carboxylation allows a single lysine to coordinate two nickel ions.

Its subcellular location is the cytoplasm. It carries out the reaction urea + 2 H2O + H(+) = hydrogencarbonate + 2 NH4(+). Its pathway is nitrogen metabolism; urea degradation; CO(2) and NH(3) from urea (urease route): step 1/1. The sequence is that of Urease subunit alpha from Magnetococcus marinus (strain ATCC BAA-1437 / JCM 17883 / MC-1).